A 1171-amino-acid chain; its full sequence is ATP-dependent helicase/deoxyribonuclease subunit B (1171 aa).

The region spanning 1-301 is the UvrD-like helicase ATP-binding domain; the sequence is MSLRFVIGRA…AHLEMHYEAR (301 aa). An ATP-binding site is contributed by 8–15; it reads GRAGSGKS. Residues 281–587 enclose the UvrD-like helicase C-terminal domain; that stretch reads MKQPRFHSQA…QFANIPPSLD (307 aa). The [4Fe-4S] cluster site is built by Cys-805, Cys-1129, Cys-1132, and Cys-1138.

The protein belongs to the helicase family. AddB/RexB type 1 subfamily. As to quaternary structure, heterodimer of AddA and AddB. Requires Mg(2+) as cofactor. It depends on [4Fe-4S] cluster as a cofactor.

In terms of biological role, the heterodimer acts as both an ATP-dependent DNA helicase and an ATP-dependent, dual-direction single-stranded exonuclease. Recognizes the chi site generating a DNA molecule suitable for the initiation of homologous recombination. The AddB subunit has 5' -&gt; 3' nuclease activity but not helicase activity. The chain is ATP-dependent helicase/deoxyribonuclease subunit B from Bacillus mycoides (strain KBAB4) (Bacillus weihenstephanensis).